We begin with the raw amino-acid sequence, 357 residues long: DNA replication and repair protein RecF (357 aa).

30-37 (GANGSGKT) contributes to the ATP binding site.

This sequence belongs to the RecF family.

The protein localises to the cytoplasm. Functionally, the RecF protein is involved in DNA metabolism; it is required for DNA replication and normal SOS inducibility. RecF binds preferentially to single-stranded, linear DNA. It also seems to bind ATP. This Salmonella schwarzengrund (strain CVM19633) protein is DNA replication and repair protein RecF.